The following is a 322-amino-acid chain: Crystallin J1B (322 aa).

It belongs to the ADP-ribosylglycohydrolase family. J1 crystallin subfamily. In terms of tissue distribution, expressed in the rhopalia. Present in both the large and small eyes.

The sequence is that of Crystallin J1B from Tripedalia cystophora (Jellyfish).